The chain runs to 118 residues: UPF0295 protein BCG9842_B4782 (118 aa).

2 helical membrane-spanning segments follow: residues 12 to 32 (IRTF…LGVF) and 43 to 63 (FMMV…WIGM).

It belongs to the UPF0295 family.

It is found in the cell membrane. The protein is UPF0295 protein BCG9842_B4782 of Bacillus cereus (strain G9842).